The chain runs to 590 residues: L-gulonolactone oxidase 5 (590 aa).

Residues 1 to 31 (MAFGYSPSYCSFWRTLLGLYCLFTLVHTVIS) form the signal peptide. In terms of domain architecture, FAD-binding PCMH-type spans 60–242 (STCRAANVAY…SQVTFELQPM (183 aa)).

It belongs to the oxygen-dependent FAD-linked oxidoreductase family. The cofactor is FAD.

The enzyme catalyses L-gulono-1,4-lactone + O2 = L-ascorbate + H2O2 + H(+). Its pathway is cofactor biosynthesis; L-ascorbate biosynthesis. In terms of biological role, catalyzes the oxidation of L-gulono-1,4-lactone to ascorbic acid. L-gulono-1,4-lactone is oxidized to hydrogen peroxide and L-xylo-hexulonolactone which spontaneously isomerizes to L-ascorbate. This Arabidopsis thaliana (Mouse-ear cress) protein is L-gulonolactone oxidase 5.